The following is a 416-amino-acid chain: Serine/threonine transporter SstT (416 aa).

9 consecutive transmembrane segments (helical) span residues 15 to 35 (SLVSQILVGLVFGILLAMFMP), 49 to 69 (VGALKAVAPLLVFVLVMAAII), 82 to 102 (ILLLYLLGTFLAAAVAVVASF), 141 to 161 (ALLDANYIGILAWAIGLGIAM), 192 to 212 (LGILGLVASTLAETGFDALFG), 217 to 237 (LVVLIGCMLFIAFVVNPLIVF), 288 to 308 (VSIPLGATINMAGAAITITVL), 316 to 336 (LGMEVDLATAILLSVVATISA), and 363 to 383 (IAMQVVAVGFIIGVLQDSAET).

Belongs to the dicarboxylate/amino acid:cation symporter (DAACS) (TC 2.A.23) family.

It localises to the cell inner membrane. The catalysed reaction is L-serine(in) + Na(+)(in) = L-serine(out) + Na(+)(out). It catalyses the reaction L-threonine(in) + Na(+)(in) = L-threonine(out) + Na(+)(out). In terms of biological role, involved in the import of serine and threonine into the cell, with the concomitant import of sodium (symport system). The polypeptide is Serine/threonine transporter SstT (Aeromonas hydrophila subsp. hydrophila (strain ATCC 7966 / DSM 30187 / BCRC 13018 / CCUG 14551 / JCM 1027 / KCTC 2358 / NCIMB 9240 / NCTC 8049)).